Here is a 263-residue protein sequence, read N- to C-terminus: Oxygen-evolving enhancer protein 2-1, chloroplastic (263 aa).

The residue at position 153 (Ser-153) is a Phosphoserine.

The protein belongs to the PsbP family. In terms of assembly, interacts with WAK1.

Its subcellular location is the plastid. It is found in the chloroplast thylakoid lumen. Functionally, may be involved in the regulation of photosystem II. This Arabidopsis thaliana (Mouse-ear cress) protein is Oxygen-evolving enhancer protein 2-1, chloroplastic (PSBP1).